The sequence spans 263 residues: Gap junction beta-6 protein (263 aa).

At 1 to 19 (MDWGALQTILGGVNKHSTS) the chain is on the cytoplasmic side. Residues 20–40 (IGKIWLTVLFIFRIMILVVAA) form a helical membrane-spanning segment. The Extracellular segment spans residues 41–75 (ERVWGDEQDDFICNTLQPGCKNVCYDHFFPISHIR). A helical transmembrane segment spans residues 76 to 96 (LWALQLIFVSTPALLVAMHVA). Over 97 to 137 (YRRHEKKRQFRKGDQKCEYKDIEEIRTQRFRIEGTLWWTYT) the chain is Cytoplasmic. The helical transmembrane segment at 138–158 (CSIFFRLVFEAVFMYAFYFMY) threads the bilayer. The Extracellular portion of the chain corresponds to 159–189 (DGFRMPRLMKCSAWPCPNTVDCFVSRPTEKT). The helical transmembrane segment at 190–210 (VFTIFMIAVSSICILLNVAEL) threads the bilayer. The Cytoplasmic segment spans residues 211–263 (CYLLTKFFLRRSRKAGNQKHHPNHENKEETKQNEMNELISDSCQNTVIGFTSS).

Belongs to the connexin family. Beta-type (group I) subfamily. As to quaternary structure, a connexon is composed of a hexamer of connexins. As to expression, exclusively expressed in the cochlea of the inner ear, where it is found in cells of the tegmentum vasculosum, cuboidal cells, supporting cells and clear cells.

The protein resides in the cell membrane. It is found in the cell junction. The protein localises to the gap junction. Its function is as follows. One gap junction consists of a cluster of closely packed pairs of transmembrane channels, the connexons, through which materials of low MW diffuse from one cell to a neighboring cell. The polypeptide is Gap junction beta-6 protein (GJB6) (Gallus gallus (Chicken)).